Here is a 194-residue protein sequence, read N- to C-terminus: MAQLFFKYGAMNSGKTIEILKVAHNYEEQDKPVVLMTSGLDTRDGVGKVSSRIGLRRDAIPIFEETNVFDLINDLSYKPFCVLVDECQFLNKHHVIEFARIVDELDIPVMAFGLKNDFRNELFEGSKYLLLYADKLEELKTICWFCHKKATMNLHYIDGNPVYEGDQVQIGGNEAYYPVCRKHYFHPKTVNEEQ.

ATP-binding positions include 9–16 (GAMNSGKT) and 85–88 (DECQ). Catalysis depends on E86, which acts as the Proton acceptor. C143, C146, C180, and H183 together coordinate Zn(2+).

The protein belongs to the thymidine kinase family. As to quaternary structure, homotetramer.

Its subcellular location is the cytoplasm. The catalysed reaction is thymidine + ATP = dTMP + ADP + H(+). The sequence is that of Thymidine kinase from Enterococcus faecalis (strain ATCC 700802 / V583).